We begin with the raw amino-acid sequence, 61 residues long: Small ribosomal subunit protein uS14 (61 aa).

Zn(2+)-binding residues include Cys-24, Cys-27, Cys-40, and Cys-43.

The protein belongs to the universal ribosomal protein uS14 family. Zinc-binding uS14 subfamily. Part of the 30S ribosomal subunit. Contacts proteins S3 and S10. It depends on Zn(2+) as a cofactor.

In terms of biological role, binds 16S rRNA, required for the assembly of 30S particles and may also be responsible for determining the conformation of the 16S rRNA at the A site. This is Small ribosomal subunit protein uS14 from Treponema pallidum (strain Nichols).